A 40-amino-acid chain; its full sequence is Natriuretic peptide PpNP-a (40 aa).

Residues 1–8 (SGSKTANI) constitute a propeptide that is removed on maturation. The tract at residues 1 to 40 (SGSKTANIGDGCFGVPIDHIGSTSGMGCGSPRPKPTPGGS) is disordered. A disulfide bridge links C12 with C28.

This sequence belongs to the natriuretic peptide family. In terms of tissue distribution, expressed by the venom gland.

The protein resides in the secreted. In terms of biological role, snake venom natriuretic peptide that targets both NPR1 and NPR2. Exhibits hypotensive and vasodepressor activities. The chain is Natriuretic peptide PpNP-a from Pseudechis porphyriacus (Red-bellied black snake).